The following is a 329-amino-acid chain: MNPVDYLRISLIDRCNFRCQYCMPEGVKLDYILRSELLTDDELLTLIKAVFIPLGFTKFRLTGGEPLLRPGVVQLVRDIAALPQTEDLSMTTNGFLLSRMAKELYQAGLKRINISLDSLNQETFDKIIGNFGASKWQQTWEGIQTAYEVGFNPLKLNVVIIPGINEGEIEDLAALTIDRNWHVRFIEFMPIGNRELFSDRAWVPSEEIRQTIRQKWGLIESTIKGNGPADVFQIPGGKGTLGFISQMSECFCDRCNRMRLSADGWLRPCLLNETGQIDLKTALRQGIKTTELREQVREILAIKPNINYQERESGTQTGTYQRTMSQIGG.

The Radical SAM core domain occupies 1–229 (MNPVDYLRIS…ESTIKGNGPA (229 aa)). Residue R8 participates in GTP binding. Residues C15 and C19 each coordinate [4Fe-4S] cluster. Y21 is an S-adenosyl-L-methionine binding site. Position 22 (C22) interacts with [4Fe-4S] cluster. R60 lines the GTP pocket. G64 is a binding site for S-adenosyl-L-methionine. GTP is bound at residue T91. S115 lines the S-adenosyl-L-methionine pocket. A GTP-binding site is contributed by K155. M189 is an S-adenosyl-L-methionine binding site. The [4Fe-4S] cluster site is built by C252 and C255. Residue 257–259 (RMR) coordinates GTP. Residue C269 participates in [4Fe-4S] cluster binding.

Belongs to the radical SAM superfamily. MoaA family. In terms of assembly, monomer and homodimer. [4Fe-4S] cluster serves as cofactor.

The catalysed reaction is GTP + AH2 + S-adenosyl-L-methionine = (8S)-3',8-cyclo-7,8-dihydroguanosine 5'-triphosphate + 5'-deoxyadenosine + L-methionine + A + H(+). Its pathway is cofactor biosynthesis; molybdopterin biosynthesis. In terms of biological role, catalyzes the cyclization of GTP to (8S)-3',8-cyclo-7,8-dihydroguanosine 5'-triphosphate. The polypeptide is GTP 3',8-cyclase (Rippkaea orientalis (strain PCC 8801 / RF-1) (Cyanothece sp. (strain PCC 8801))).